We begin with the raw amino-acid sequence, 367 residues long: Nociceptin receptor (367 aa).

At 1-45 (MESLFPAPYWEVLYGSHFQGNLSLLNETVPHHLLLNASHSAFLPL) the chain is on the extracellular side. Residues asparagine 21, asparagine 26, and asparagine 36 are each glycosylated (N-linked (GlcNAc...) asparagine). The chain crosses the membrane as a helical span at residues 46 to 71 (GLKVTIVGLYLAVCIGGLLGNCLVMY). Residues 72–84 (VILRHTKMKTATN) lie on the Cytoplasmic side of the membrane. A helical transmembrane segment spans residues 85 to 106 (IYIFNLALADTLVLLTLPFQGT). Over 107–121 (DILLGFWPFGNALCK) the chain is Extracellular. A disulfide bridge links cysteine 120 with cysteine 197. A helical membrane pass occupies residues 122–143 (TVIAIDYYNMFTSTFTLTAMSV). At 144-162 (DRYVAICHPIRALDVRTSS) the chain is on the cytoplasmic side. The chain crosses the membrane as a helical span at residues 163–185 (KAQAVNVAIWALASVVGVPVAIM). Residues 186-208 (GSAQVEDEEIECLVEIPAPQDYW) are Extracellular-facing. A helical transmembrane segment spans residues 209-233 (GPVFAICIFLFSFIIPVLIISVCYS). Over 234–261 (LMIRRLRGVRLLSGSREKDRNLRRITRL) the chain is Cytoplasmic. The helical transmembrane segment at 262 to 282 (VLVVVAVFVGCWTPVQVFVLV) threads the bilayer. Topologically, residues 283–297 (QGLGVQPGSETAVAI) are extracellular. The helical transmembrane segment at 298-319 (LRFCTALGYVNSCLNPILYAFL) threads the bilayer. Over 320–367 (DENFKACFRKFCCASSLHREMQVSDRVRSIAKDVGLGCKTSETVPRPA) the chain is Cytoplasmic. Residue cysteine 331 is the site of S-palmitoyl cysteine attachment.

It belongs to the G-protein coupled receptor 1 family. Phosphorylation at Ser-360 requires GRK3. In terms of tissue distribution, highly expressed in several brain areas, the intestine, liver and spleen. Detected in sympathetic stellate ganglion neurons.

It localises to the cell membrane. Its subcellular location is the cytoplasmic vesicle. In terms of biological role, G-protein coupled opioid receptor that functions as a receptor for the endogenous neuropeptide nociceptin. Ligand binding causes a conformation change that triggers signaling via guanine nucleotide-binding proteins (G proteins) and modulates the activity of down-stream effectors. Signaling via G proteins mediates inhibition of adenylate cyclase activity and calcium channel activity. Arrestins modulate signaling via G proteins and mediate the activation of alternative signaling pathways that lead to the activation of MAP kinases. Plays a role in modulating nociception and the perception of pain. Plays a role in the regulation of locomotor activity by the neuropeptide nociceptin. The polypeptide is Nociceptin receptor (Oprl1) (Rattus norvegicus (Rat)).